The sequence spans 160 residues: 2-amino-4-hydroxy-6-hydroxymethyldihydropteridine pyrophosphokinase (160 aa).

This sequence belongs to the HPPK family. Monomer.

It carries out the reaction 6-hydroxymethyl-7,8-dihydropterin + ATP = (7,8-dihydropterin-6-yl)methyl diphosphate + AMP + H(+). Its pathway is cofactor biosynthesis; tetrahydrofolate biosynthesis; 2-amino-4-hydroxy-6-hydroxymethyl-7,8-dihydropteridine diphosphate from 7,8-dihydroneopterin triphosphate: step 4/4. Functionally, catalyzes the transfer of pyrophosphate from adenosine triphosphate (ATP) to 6-hydroxymethyl-7,8-dihydropterin, an enzymatic step in folate biosynthesis pathway. The polypeptide is 2-amino-4-hydroxy-6-hydroxymethyldihydropteridine pyrophosphokinase (folK) (Haemophilus influenzae (strain ATCC 51907 / DSM 11121 / KW20 / Rd)).